A 377-amino-acid chain; its full sequence is Leucine aminopeptidase A (377 aa).

Residues 1-18 (MRFLPCIATLAATASALA) form the signal peptide. Residues 19 to 79 (IGDHVRSDDQ…SNKKQKLAVT (61 aa)) constitute a propeptide that is removed on maturation. A glycan (N-linked (GlcNAc...) asparagine) is linked at Asn87. Residues His176, Asp195, Glu234, and Asp261 each coordinate Zn(2+). N-linked (GlcNAc...) asparagine glycosylation occurs at Asn288. Cys310 and Cys314 are joined by a disulfide. His343 contributes to the Zn(2+) binding site.

Belongs to the peptidase M28 family. M28E subfamily. As to quaternary structure, monomer. Zn(2+) serves as cofactor.

The protein resides in the secreted. Its activity is regulated as follows. Calcium, magnesium and manganese cations reduce peptidase activity to 20.3-51.3 percent. The metal ion chelating reagent EDTA almost completely inhibits activity. The protease inhibitor bacitracin and the aminopeptidase B inhibitor bestatin, as well as DTT and beta-mercaptoethanol act also as lap A inhibitorsD. Extracellular aminopeptidase that allows assimilation of proteinaceous substrates. The protein is Leucine aminopeptidase A (lapA) of Aspergillus oryzae (strain ATCC 42149 / RIB 40) (Yellow koji mold).